The chain runs to 276 residues: Dermonecrotic toxin LlSicTox-alphaIV2iv (276 aa).

The active site involves His-5. Glu-25 and Asp-27 together coordinate Mg(2+). His-41 (nucleophile) is an active-site residue. Disulfide bonds link Cys-45/Cys-51 and Cys-47/Cys-193. Mg(2+) is bound at residue Asp-85.

This sequence belongs to the arthropod phospholipase D family. Class II subfamily. It depends on Mg(2+) as a cofactor. As to expression, expressed by the venom gland.

The protein localises to the secreted. The catalysed reaction is an N-(acyl)-sphingosylphosphocholine = an N-(acyl)-sphingosyl-1,3-cyclic phosphate + choline. The enzyme catalyses an N-(acyl)-sphingosylphosphoethanolamine = an N-(acyl)-sphingosyl-1,3-cyclic phosphate + ethanolamine. It catalyses the reaction a 1-acyl-sn-glycero-3-phosphocholine = a 1-acyl-sn-glycero-2,3-cyclic phosphate + choline. It carries out the reaction a 1-acyl-sn-glycero-3-phosphoethanolamine = a 1-acyl-sn-glycero-2,3-cyclic phosphate + ethanolamine. Dermonecrotic toxins cleave the phosphodiester linkage between the phosphate and headgroup of certain phospholipids (sphingolipid and lysolipid substrates), forming an alcohol (often choline) and a cyclic phosphate. This toxin acts on sphingomyelin (SM). It may also act on ceramide phosphoethanolamine (CPE), lysophosphatidylcholine (LPC) and lysophosphatidylethanolamine (LPE), but not on lysophosphatidylserine (LPS), and lysophosphatidylglycerol (LPG). It acts by transphosphatidylation, releasing exclusively cyclic phosphate products as second products. Induces dermonecrosis, hemolysis, increased vascular permeability, edema, inflammatory response, and platelet aggregation. The protein is Dermonecrotic toxin LlSicTox-alphaIV2iv of Loxosceles laeta (South American recluse spider).